We begin with the raw amino-acid sequence, 288 residues long: Aquaporin NIP2-1 (288 aa).

The residue at position 1 (methionine 1) is an N-acetylmethionine. 2 helical membrane-spanning segments follow: residues 50-70 (LLAE…AIAV) and 77-97 (VVTL…LVYC). The NPA 1 signature appears at 106-108 (NPA). The next 3 membrane-spanning stretches (helical) occupy residues 126-146 (AYIT…RLLF), 170-190 (LQAF…VCAV), and 202-222 (GLII…VSGA). The short motif at 225–227 (NPA) is the NPA 2 element. A helical membrane pass occupies residues 234–254 (LVWGCYKGIWIYLLAPTLGAV). Serine 278 carries the post-translational modification Phosphoserine.

Belongs to the MIP/aquaporin (TC 1.A.8) family. NIP (TC 1.A.8.12) subfamily. As to expression, specifically expressed in roots with high expression in root elongation zone and root stele.

The protein resides in the endoplasmic reticulum membrane. Its function is as follows. Low water transport activity in yeast cells. In Arabidopsis thaliana (Mouse-ear cress), this protein is Aquaporin NIP2-1 (NIP2-1).